Here is a 136-residue protein sequence, read N- to C-terminus: uncharacterized protein (136 aa).

This is an uncharacterized protein from Frog virus 3 (isolate Goorha) (FV-3).